Here is a 376-residue protein sequence, read N- to C-terminus: NIF3-like protein 1 (376 aa).

Position 108 is an N6-acetyllysine (K108). Positions 243–376 are mediates interaction with COPS2; it reads LLLHTGMGRL…ETDRDPLRVV (134 aa). The residue at position 254 (T254) is a Phosphothreonine. Phosphoserine is present on S258.

Belongs to the GTP cyclohydrolase I type 2/NIF3 family. Homodimer. Interacts with COPS2. Interacts with THOC7.

The protein localises to the cytoplasm. It is found in the nucleus. In terms of biological role, may function as a transcriptional corepressor through its interaction with COPS2, negatively regulating the expression of genes involved in neuronal differentiation. This is NIF3-like protein 1 from Rattus norvegicus (Rat).